Reading from the N-terminus, the 98-residue chain is NADH-ubiquinone oxidoreductase chain 4L (98 aa).

Helical transmembrane passes span 1–21 (MSLTYMNMFMAFTISLLGLLM), 29–49 (SLLCLEGMMLSLFVMMTMTIL), and 61–81 (IILLVFAACEAALGLSLLVMV).

This sequence belongs to the complex I subunit 4L family. Core subunit of respiratory chain NADH dehydrogenase (Complex I) which is composed of 45 different subunits.

It localises to the mitochondrion inner membrane. It catalyses the reaction a ubiquinone + NADH + 5 H(+)(in) = a ubiquinol + NAD(+) + 4 H(+)(out). Functionally, core subunit of the mitochondrial membrane respiratory chain NADH dehydrogenase (Complex I) which catalyzes electron transfer from NADH through the respiratory chain, using ubiquinone as an electron acceptor. Part of the enzyme membrane arm which is embedded in the lipid bilayer and involved in proton translocation. The polypeptide is NADH-ubiquinone oxidoreductase chain 4L (MT-ND4L) (Chiroderma trinitatum (Little big-eyed bat)).